Consider the following 224-residue polypeptide: MAEILRAENIKKVIRGYEILKGISLSVKKGEFVSIIGASGSGKSTLLYILGLLDAPTEGKVFLEGKEVDYTNEKELSLLRNRKLGFVFQFHYLIPELTALENVIVPMLKMGKPKKEAKERGEYLLSELGLGDKLSRKPYELSGGEQQRVAIARALANEPILLFADEPTGNLDSANTKRVMDIFLKINEGGTSIVMVTHERELAELTHRTLEMKDGKVVGEITRV.

The 220-residue stretch at Leu5–Val224 folds into the ABC transporter domain. Residue Gly37 to Ser44 participates in ATP binding.

The protein belongs to the ABC transporter superfamily. Lipoprotein translocase (TC 3.A.1.125) family. The complex is composed of two ATP-binding proteins (LolD) and two transmembrane proteins (LolC and LolE).

It localises to the cell inner membrane. Its function is as follows. Part of the ABC transporter complex LolCDE involved in the translocation of mature outer membrane-directed lipoproteins, from the inner membrane to the periplasmic chaperone, LolA. Responsible for the formation of the LolA-lipoprotein complex in an ATP-dependent manner. This is Lipoprotein-releasing system ATP-binding protein LolD from Aquifex aeolicus (strain VF5).